The sequence spans 444 residues: CCA-adding enzyme (444 aa).

ATP-binding residues include Ser57 and Arg60. Residues Ser57 and Arg60 each contribute to the CTP site. Asp69, Asp71, and Asp124 together coordinate Mg(2+). Residues His147, Lys168, and Tyr177 each coordinate ATP. CTP contacts are provided by His147, Lys168, and Tyr177.

This sequence belongs to the tRNA nucleotidyltransferase/poly(A) polymerase family. Archaeal CCA-adding enzyme subfamily. Homodimer. Requires Mg(2+) as cofactor.

It catalyses the reaction a tRNA precursor + 2 CTP + ATP = a tRNA with a 3' CCA end + 3 diphosphate. It carries out the reaction a tRNA with a 3' CCA end + 2 CTP + ATP = a tRNA with a 3' CCACCA end + 3 diphosphate. Functionally, catalyzes the addition and repair of the essential 3'-terminal CCA sequence in tRNAs without using a nucleic acid template. Adds these three nucleotides in the order of C, C, and A to the tRNA nucleotide-73, using CTP and ATP as substrates and producing inorganic pyrophosphate. tRNA 3'-terminal CCA addition is required both for tRNA processing and repair. Also involved in tRNA surveillance by mediating tandem CCA addition to generate a CCACCA at the 3' terminus of unstable tRNAs. While stable tRNAs receive only 3'-terminal CCA, unstable tRNAs are marked with CCACCA and rapidly degraded. The protein is CCA-adding enzyme of Methanococcus maripaludis (strain C7 / ATCC BAA-1331).